Consider the following 762-residue polypeptide: Acyl-homoserine lactone acylase PvdQ (762 aa).

The N-terminal stretch at 1–23 (MGMRTVLTGLAGMLLGSMMPVQA) is a signal peptide. Positions 194–216 (ALSGEQAFQVAEQRRQRFRLERG) are cleaved as a propeptide — spacer peptide. Ser-217 functions as the Nucleophile in the catalytic mechanism.

It belongs to the peptidase S45 family. In terms of assembly, heterodimer of an alpha subunit and a beta subunit processed from the same precursor.

The protein resides in the periplasm. The catalysed reaction is an N-acyl-L-homoserine lactone + H2O = L-homoserine lactone + a carboxylate. Catalyzes the deacylation of acyl-homoserine lactone (AHL or acyl-HSL), releasing homoserine lactone (HSL) and the corresponding fatty acid. Possesses a specificity for the degradation of long-chain acyl-HSLs (side chains of 11 to 14 carbons in length). Degrades 3-oxo-C12-HSL, one of the two main AHL signal molecules of P.aeruginosa, and thereby functions as a quorum quencher, inhibiting the las quorum-sensing system. Therefore, may enable P.aeruginosa to modulate its own quorum-sensing-dependent pathogenic potential. Also appears to be required for pyoverdin biosynthesis. The sequence is that of Acyl-homoserine lactone acylase PvdQ (pvdQ) from Pseudomonas aeruginosa (strain ATCC 15692 / DSM 22644 / CIP 104116 / JCM 14847 / LMG 12228 / 1C / PRS 101 / PAO1).